A 73-amino-acid chain; its full sequence is Tetrahydromethanopterin S-methyltransferase subunit G (73 aa).

The helical transmembrane segment at 48–68 (IGILYGAVVGLLLFLIYVSVS) threads the bilayer.

It belongs to the MtrG family. In terms of assembly, the complex is composed of 8 subunits; MtrA, MtrB, MtrC, MtrD, MtrE, MtrF, MtrG and MtrH.

The protein resides in the cell membrane. It catalyses the reaction 5-methyl-5,6,7,8-tetrahydromethanopterin + coenzyme M + 2 Na(+)(in) = 5,6,7,8-tetrahydromethanopterin + methyl-coenzyme M + 2 Na(+)(out). It participates in one-carbon metabolism; methanogenesis from CO(2); methyl-coenzyme M from 5,10-methylene-5,6,7,8-tetrahydromethanopterin: step 2/2. Its function is as follows. Part of a complex that catalyzes the formation of methyl-coenzyme M and tetrahydromethanopterin from coenzyme M and methyl-tetrahydromethanopterin. This is an energy-conserving, sodium-ion translocating step. This chain is Tetrahydromethanopterin S-methyltransferase subunit G, found in Methanosarcina acetivorans (strain ATCC 35395 / DSM 2834 / JCM 12185 / C2A).